The primary structure comprises 347 residues: Phosphoribosylformylglycinamidine cyclo-ligase (347 aa).

It belongs to the AIR synthase family.

It is found in the cytoplasm. The catalysed reaction is 2-formamido-N(1)-(5-O-phospho-beta-D-ribosyl)acetamidine + ATP = 5-amino-1-(5-phospho-beta-D-ribosyl)imidazole + ADP + phosphate + H(+). Its pathway is purine metabolism; IMP biosynthesis via de novo pathway; 5-amino-1-(5-phospho-D-ribosyl)imidazole from N(2)-formyl-N(1)-(5-phospho-D-ribosyl)glycinamide: step 2/2. This is Phosphoribosylformylglycinamidine cyclo-ligase from Prochlorococcus marinus subsp. pastoris (strain CCMP1986 / NIES-2087 / MED4).